The sequence spans 67 residues: Bombesin (67 aa).

The first 30 residues, 1–30 (MLLLSAVKTLLLAWLGIVLVFMSIIKSAML), serve as a signal peptide directing secretion. The propeptide occupies 31 to 49 (DFLQEAGKLEGIETYKKEA). A Pyrrolidone carboxylic acid modification is found at Q50. Position 64 is a methionine amide (M64).

Expressed by the skin glands.

It localises to the secreted. Stimulates smooth muscle contraction in isolated rat stomach strip. In Rana shuchinae (Sichuan frog), this protein is Bombesin.